A 410-amino-acid chain; its full sequence is Peptidase T (410 aa).

His-77 is a Zn(2+) binding site. Asp-79 is a catalytic residue. Asp-140 contributes to the Zn(2+) binding site. Glu-174 acts as the Proton acceptor in catalysis. Residues Glu-175, Asp-197, and His-379 each contribute to the Zn(2+) site.

It belongs to the peptidase M20B family. Zn(2+) serves as cofactor.

The protein resides in the cytoplasm. It catalyses the reaction Release of the N-terminal residue from a tripeptide.. Cleaves the N-terminal amino acid of tripeptides. This is Peptidase T from Desulfitobacterium hafniense (strain DSM 10664 / DCB-2).